Here is a 264-residue protein sequence, read N- to C-terminus: Thymidylate synthase (264 aa).

Residue Arg21 coordinates dUMP. His51 provides a ligand contact to (6R)-5,10-methylene-5,6,7,8-tetrahydrofolate. A dUMP-binding site is contributed by 126-127 (RR). Cys146 functions as the Nucleophile in the catalytic mechanism. Residues 166-169 (RSAD), Asn177, and 207-209 (HIY) contribute to the dUMP site. Asp169 contacts (6R)-5,10-methylene-5,6,7,8-tetrahydrofolate. A (6R)-5,10-methylene-5,6,7,8-tetrahydrofolate-binding site is contributed by Ser263.

Belongs to the thymidylate synthase family. Bacterial-type ThyA subfamily. In terms of assembly, homodimer.

It localises to the cytoplasm. The catalysed reaction is dUMP + (6R)-5,10-methylene-5,6,7,8-tetrahydrofolate = 7,8-dihydrofolate + dTMP. It participates in pyrimidine metabolism; dTTP biosynthesis. Catalyzes the reductive methylation of 2'-deoxyuridine-5'-monophosphate (dUMP) to 2'-deoxythymidine-5'-monophosphate (dTMP) while utilizing 5,10-methylenetetrahydrofolate (mTHF) as the methyl donor and reductant in the reaction, yielding dihydrofolate (DHF) as a by-product. This enzymatic reaction provides an intracellular de novo source of dTMP, an essential precursor for DNA biosynthesis. The sequence is that of Thymidylate synthase from Bacillus velezensis (strain DSM 23117 / BGSC 10A6 / LMG 26770 / FZB42) (Bacillus amyloliquefaciens subsp. plantarum).